The sequence spans 57 residues: Large ribosomal subunit protein bL32B (57 aa).

Belongs to the bacterial ribosomal protein bL32 family.

This is Large ribosomal subunit protein bL32B from Listeria welshimeri serovar 6b (strain ATCC 35897 / DSM 20650 / CCUG 15529 / CIP 8149 / NCTC 11857 / SLCC 5334 / V8).